The following is an 89-amino-acid chain: Small ribosomal subunit protein uS15 (89 aa).

The protein belongs to the universal ribosomal protein uS15 family. As to quaternary structure, part of the 30S ribosomal subunit. Forms a bridge to the 50S subunit in the 70S ribosome, contacting the 23S rRNA.

Its function is as follows. One of the primary rRNA binding proteins, it binds directly to 16S rRNA where it helps nucleate assembly of the platform of the 30S subunit by binding and bridging several RNA helices of the 16S rRNA. Functionally, forms an intersubunit bridge (bridge B4) with the 23S rRNA of the 50S subunit in the ribosome. The polypeptide is Small ribosomal subunit protein uS15 (Acidothermus cellulolyticus (strain ATCC 43068 / DSM 8971 / 11B)).